We begin with the raw amino-acid sequence, 125 residues long: Small ribosomal subunit protein uS12 (125 aa).

Positions 1–30 (MPTISQLVRKPRAAKPLKSKVPALGNSPQK) are disordered. Residues 9–18 (RKPRAAKPLK) show a composition bias toward basic residues. Position 89 is a 3-methylthioaspartic acid (Asp-89). Residues 103–125 (DTAGVKDRKQGRSKYGAKKPKSA) are disordered. Basic residues predominate over residues 113-125 (GRSKYGAKKPKSA).

This sequence belongs to the universal ribosomal protein uS12 family. As to quaternary structure, part of the 30S ribosomal subunit. Contacts proteins S8 and S17. May interact with IF1 in the 30S initiation complex.

Its function is as follows. With S4 and S5 plays an important role in translational accuracy. In terms of biological role, interacts with and stabilizes bases of the 16S rRNA that are involved in tRNA selection in the A site and with the mRNA backbone. Located at the interface of the 30S and 50S subunits, it traverses the body of the 30S subunit contacting proteins on the other side and probably holding the rRNA structure together. The combined cluster of proteins S8, S12 and S17 appears to hold together the shoulder and platform of the 30S subunit. In Nitrosospira multiformis (strain ATCC 25196 / NCIMB 11849 / C 71), this protein is Small ribosomal subunit protein uS12.